A 300-amino-acid polypeptide reads, in one-letter code: Estradiol 17-beta-dehydrogenase 11 (300 aa).

Residues 1–19 form the signal peptide; sequence MKFLLDILLLLPLLIVCSL. 40–64 serves as a coordination point for NADP(+); that stretch reads LITGAGHGIGRLTAYEFAKLKSKLV. Position 172 (serine 172) interacts with substrate. Tyrosine 185 (proton acceptor) is an active-site residue.

Belongs to the short-chain dehydrogenases/reductases (SDR) family. 17-beta-HSD 3 subfamily. As to expression, present at high level in steroidogenic cells such as syncytiotrophoblasts, sebaceous gland, Leydig cells, and granulosa cells of the dominant follicle and corpus luteum. In lung, it is detected in the ciliated epithelium and in acini of adult trachea, in bronchioles, but not in alveoli. In the eye, it is detected in the nonpigmented epithelium of the ciliary body and, at lower level, in the inner nuclear layer of the retina (at protein level). Widely expressed. Highly expressed in retina, pancreas, kidney, liver, lung, adrenal, small intestine, ovary and heart.

It is found in the endoplasmic reticulum. The protein localises to the lipid droplet. The enzyme catalyses 17beta-estradiol + NAD(+) = estrone + NADH + H(+). The catalysed reaction is 17beta-estradiol + NADP(+) = estrone + NADPH + H(+). Can convert androstan-3-alpha,17-beta-diol (3-alpha-diol) to androsterone in vitro, suggesting that it may participate in androgen metabolism during steroidogenesis. May act by metabolizing compounds that stimulate steroid synthesis and/or by generating metabolites that inhibit it. Has no activity toward DHEA (dehydroepiandrosterone), or A-dione (4-androste-3,17-dione), and only a slight activity toward testosterone to A-dione. Tumor-associated antigen in cutaneous T-cell lymphoma. This is Estradiol 17-beta-dehydrogenase 11 (HSD17B11) from Homo sapiens (Human).